The following is a 209-amino-acid chain: Large ribosomal subunit protein uL3 (209 aa).

The disordered stretch occupies residues 125-148 (RHGQSRGPMAHGSRYHRRPGSMGP).

This sequence belongs to the universal ribosomal protein uL3 family. Part of the 50S ribosomal subunit. Forms a cluster with proteins L14 and L19.

Its function is as follows. One of the primary rRNA binding proteins, it binds directly near the 3'-end of the 23S rRNA, where it nucleates assembly of the 50S subunit. This Lysinibacillus sphaericus (strain C3-41) protein is Large ribosomal subunit protein uL3.